The chain runs to 283 residues: Pantothenate synthetase (283 aa).

30-37 provides a ligand contact to ATP; sequence MGALHEGH. The active-site Proton donor is the His37. Residue Gln61 participates in (R)-pantoate binding. Gln61 serves as a coordination point for beta-alanine. 150 to 153 provides a ligand contact to ATP; sequence GRKD. Gln156 contacts (R)-pantoate. ATP-binding positions include Val179 and 187 to 190; that span reads MSSR.

The protein belongs to the pantothenate synthetase family. As to quaternary structure, homodimer.

The protein localises to the cytoplasm. It carries out the reaction (R)-pantoate + beta-alanine + ATP = (R)-pantothenate + AMP + diphosphate + H(+). Its pathway is cofactor biosynthesis; (R)-pantothenate biosynthesis; (R)-pantothenate from (R)-pantoate and beta-alanine: step 1/1. Functionally, catalyzes the condensation of pantoate with beta-alanine in an ATP-dependent reaction via a pantoyl-adenylate intermediate. The sequence is that of Pantothenate synthetase from Rhodopirellula baltica (strain DSM 10527 / NCIMB 13988 / SH1).